We begin with the raw amino-acid sequence, 211 residues long: Uracil phosphoribosyltransferase (211 aa).

5-phospho-alpha-D-ribose 1-diphosphate is bound by residues Arg-77, Arg-102, and 129-137; that span reads DPMLATGGS. Residues Ile-192 and 197 to 199 contribute to the uracil site; that span reads GDA. Asp-198 lines the 5-phospho-alpha-D-ribose 1-diphosphate pocket.

The protein belongs to the UPRTase family. Mg(2+) is required as a cofactor.

The catalysed reaction is UMP + diphosphate = 5-phospho-alpha-D-ribose 1-diphosphate + uracil. It functions in the pathway pyrimidine metabolism; UMP biosynthesis via salvage pathway; UMP from uracil: step 1/1. Allosterically activated by GTP. Functionally, catalyzes the conversion of uracil and 5-phospho-alpha-D-ribose 1-diphosphate (PRPP) to UMP and diphosphate. The protein is Uracil phosphoribosyltransferase of Corynebacterium efficiens (strain DSM 44549 / YS-314 / AJ 12310 / JCM 11189 / NBRC 100395).